Reading from the N-terminus, the 540-residue chain is MPIITLQYEDLESLTKADKDTIIDRVPMIGADIERIEKEAIDIEFFPDRPDLYSVEGVARAMRGFMNIETGLCQYEVTPSGVHIELDEKIKEVRPVLGCAIVKGINFTSSSIKSLMDLQEDLHWGLGRNRKKVSIGVHDMTNIEPPFKYQAVSPDFEFVPLDFTEPMTMDEVLEKHPKGVRFANILEGMEKYPLITDSEGKVLSFPPIINGTLTRVEESTTDLFIDVTGLGDAVYTALSIVVSALAERGGKIESVKVVYPDGTEKVTPDMTPRTLNVPRSDIDSLIGIKLTDDEIINELKRMRFDASVLEDGDMFEISVPTYRADILHNFDIVEDIAIGYGFDKIKSEFPKSATIGCAHPISVTRGVMREIMVSLGYSEVMPFTLTSQKVHFEWMNREETDDVTFVLHPISEDQTMVRTTILPNLIEIFSLNQHHELPQRLFEVGEVVVNSKNRLHLAAASIHAQANFTEIREVLDAVMRERDIEYEVVVSEDPAFIEGRRADILVNGEKVGMMGELYPEVIINFGLGQPIVGFEIDLTE.

Residues 270-347 form the B5 domain; that stretch reads MTPRTLNVPR…IGYGFDKIKS (78 aa). Asp-325, Asp-331, Glu-334, and Asp-335 together coordinate Mg(2+).

It belongs to the phenylalanyl-tRNA synthetase beta subunit family. Type 2 subfamily. In terms of assembly, tetramer of two alpha and two beta subunits. It depends on Mg(2+) as a cofactor.

The protein localises to the cytoplasm. It catalyses the reaction tRNA(Phe) + L-phenylalanine + ATP = L-phenylalanyl-tRNA(Phe) + AMP + diphosphate + H(+). This chain is Phenylalanine--tRNA ligase beta subunit, found in Methanococcoides burtonii (strain DSM 6242 / NBRC 107633 / OCM 468 / ACE-M).